Here is a 690-residue protein sequence, read N- to C-terminus: Methionine--tRNA ligase (690 aa).

Positions 13–23 match the 'HIGH' region motif; that stretch reads PYANGQIHIGH. Residues cysteine 144, cysteine 147, cysteine 157, and cysteine 160 each coordinate Zn(2+). Positions 335 to 339 match the 'KMSKS' region motif; it reads KMSKS. Lysine 338 serves as a coordination point for ATP. One can recognise a tRNA-binding domain in the interval 584-690; the sequence is DFAKIDLRVA…SGAVPGMRIR (107 aa).

Belongs to the class-I aminoacyl-tRNA synthetase family. MetG type 1 subfamily. In terms of assembly, homodimer. Zn(2+) serves as cofactor.

It localises to the cytoplasm. It catalyses the reaction tRNA(Met) + L-methionine + ATP = L-methionyl-tRNA(Met) + AMP + diphosphate. Is required not only for elongation of protein synthesis but also for the initiation of all mRNA translation through initiator tRNA(fMet) aminoacylation. The polypeptide is Methionine--tRNA ligase (Cupriavidus metallidurans (strain ATCC 43123 / DSM 2839 / NBRC 102507 / CH34) (Ralstonia metallidurans)).